Reading from the N-terminus, the 796-residue chain is Transcription factor kayak (796 aa).

Disordered stretches follow at residues 109–132 (AYQQ…SNTS), 315–341 (VVNN…SNTV), 374–429 (FNCG…GSNG), and 442–490 (VGSA…RNKL). Residues 402–429 (TTDTSSAATDSTSYQNGGHMFGNNGSNG) show a composition bias toward low complexity. Polar residues predominate over residues 447–457 (RGTSSTSNNAT). Residues 478–541 (EEKRRVRRER…HQLNFVLEAH (64 aa)) form the bZIP domain. The segment at 480 to 499 (KRRVRRERNKLAAARCRKRR) is basic motif. The leucine-zipper stretch occupies residues 506 to 534 (LSEEVDGLLKKNEDLKKEIEILTNTRHQL). Residues 569–601 (SSGSNGSHHHNSNSNNSNNNNSNNNNNSNSNDS) are disordered. Ser-621 bears the Phosphoserine mark. Disordered regions lie at residues 642-661 (PHDA…PPAA) and 774-796 (SSQN…LVSL).

The protein belongs to the bZIP family. Fos subfamily. As to quaternary structure, homodimer. Heterodimer with Jra. The kay-Jra heterodimer binds more stably to the AP-1 site than either of the two proteins alone.

It is found in the nucleus. Developmentally regulated transcription factor AP-1 binds and recognizes the enhancer DNA sequence: 5'-TGA[CG]TCA-3'. May play a role in the function or determination of a particular subset of cells in the developing embryo. It is able to carry out its function either independently of or in conjunction with Jra. This chain is Transcription factor kayak, found in Drosophila grimshawi (Hawaiian fruit fly).